Consider the following 200-residue polypeptide: uncharacterized protein (200 aa).

This is an uncharacterized protein from Bacillus subtilis (strain 168).